The primary structure comprises 89 residues: Omega-theraphotoxin-Ba1c (89 aa).

The signal sequence occupies residues 1–23 (MRSLTLAAVLACSLLLVFHTSAA). The propeptide occupies 24–50 (EEHEAQEGYLMNPGDTDTALATVDDER). 3 disulfides stabilise this stretch: Cys-54–Cys-75, Cys-58–Cys-81, and Cys-67–Cys-86.

Belongs to the neurotoxin 12 (Hwtx-2) family. 06 (TXP1) subfamily. Expressed by the venom gland.

It is found in the secreted. Inhibits voltage-gated calcium channels (Cav) in rat cerebellar granule cells. Has insecticidal activity. The protein is Omega-theraphotoxin-Ba1c of Brachypelma albiceps (Mexican golden redrump tarantula).